Here is a 2325-residue protein sequence, read N- to C-terminus: Otogelin-like protein (2325 aa).

The first 22 residues, 1–22 (MVPWRALSLPILLVSLRGYVCA), serve as a signal peptide directing secretion. One can recognise a VWFD 1 domain in the interval 112–288 (GICKTWGQYH…VLTPDDTKCV (177 aa)). 2 disulfide bridges follow: Cys-114/Cys-248 and Cys-136/Cys-287. Asn-425 carries N-linked (GlcNAc...) asparagine glycosylation. The region spanning 472-645 (VQCSVVGDSH…HAWRVSSTCF (174 aa)) is the VWFD 2 domain. Cystine bridges form between Cys-474/Cys-609, Cys-496/Cys-644, and Cys-518/Cys-526. In terms of domain architecture, TIL 1 spans 736 to 791 (CQKGMLYHHCSSLCLRSCTSLSSPEQCKDDCAEGCNCPEGKFYEETLNFCVPIYHC). Asn-817 and Asn-867 each carry an N-linked (GlcNAc...) asparagine glycan. A VWFD 3 domain is found at 937–1114 (AVCTVYGDRH…DLMEALKPCE (178 aa)). 3 cysteine pairs are disulfide-bonded: Cys-939/Cys-1069, Cys-961/Cys-1113, and Cys-983/Cys-990. N-linked (GlcNAc...) asparagine glycosylation is present at Asn-1280. The TIL 2 domain occupies 1366–1418 (RYEPCATPCFKTCSDPEALACTFLPPVEGCLPYCPKNMILDETTLKCVHPEDC). One can recognise a VWFD 4 domain in the interval 1506–1695 (CRCSMLSELS…SWEIEKSFEV (190 aa)). 2 disulfide bridges follow: Cys-1508/Cys-1655 and Cys-1549/Cys-1571. Residues Asn-1576 and Asn-2170 are each glycosylated (N-linked (GlcNAc...) asparagine). Disulfide bonds link Cys-2233-Cys-2289, Cys-2254-Cys-2303, Cys-2265-Cys-2320, and Cys-2269-Cys-2322. The CTCK domain occupies 2233–2325 (CKREERICQK…EPIDCTCQWN (93 aa)). N-linked (GlcNAc...) asparagine glycosylation occurs at Asn-2296.

Belongs to the otogelin family.

The protein localises to the secreted. In Mus musculus (Mouse), this protein is Otogelin-like protein (Otogl).